Here is a 161-residue protein sequence, read N- to C-terminus: Arachidonate 5-lipoxygenase-activating protein (161 aa).

Residues 1–8 (MDQEAVGN) lie on the Lumenal side of the membrane. Residues 9 to 30 (VVLLALVTLISVVQNAFFAHKV) traverse the membrane as a helical segment. Residues 31-52 (EHESKAHNGRSFQRTGTLAFER) lie on the Cytoplasmic side of the membrane. The helical transmembrane segment at 53–77 (VYTANQNCVDAYPTFLVVLWTAGLL) threads the bilayer. At 78 to 80 (CSQ) the chain is on the lumenal side. The chain crosses the membrane as a helical span at residues 81–102 (VPAAFAGLMYLFVRQKYFVGYL). Topologically, residues 103-107 (GERTQ) are cytoplasmic. The stretch at 108–115 (STPGYIFG) is an intramembrane region. The helical transmembrane segment at 116 to 128 (KRIILFLFLMSFA) threads the bilayer. Topologically, residues 129–161 (GILNHYLIFFFGSDFENYIRTVSTTISPLLLIP) are lumenal.

This sequence belongs to the MAPEG family. As to quaternary structure, homotrimer. Interacts with LTC4S and ALOX5.

Its subcellular location is the nucleus membrane. It is found in the endoplasmic reticulum membrane. In terms of biological role, required for leukotriene biosynthesis by ALOX5 (5-lipoxygenase). Anchors ALOX5 to the membrane. Binds arachidonic acid, and could play an essential role in the transfer of arachidonic acid to ALOX5. Binds to MK-886, a compound that blocks the biosynthesis of leukotrienes. The chain is Arachidonate 5-lipoxygenase-activating protein (Alox5ap) from Mus musculus (Mouse).